Consider the following 269-residue polypeptide: Formamidopyrimidine-DNA glycosylase (269 aa).

P2 acts as the Schiff-base intermediate with DNA in catalysis. E3 functions as the Proton donor in the catalytic mechanism. The active-site Proton donor; for beta-elimination activity is K57. DNA-binding residues include H90, R109, and K150. The FPG-type zinc-finger motif lies at 235-269 (QVYGRKGEPCRVCGTPIVATKHAQRATFYCRQCQK). R259 serves as the catalytic Proton donor; for delta-elimination activity.

Belongs to the FPG family. Monomer. Zn(2+) is required as a cofactor.

It catalyses the reaction Hydrolysis of DNA containing ring-opened 7-methylguanine residues, releasing 2,6-diamino-4-hydroxy-5-(N-methyl)formamidopyrimidine.. It carries out the reaction 2'-deoxyribonucleotide-(2'-deoxyribose 5'-phosphate)-2'-deoxyribonucleotide-DNA = a 3'-end 2'-deoxyribonucleotide-(2,3-dehydro-2,3-deoxyribose 5'-phosphate)-DNA + a 5'-end 5'-phospho-2'-deoxyribonucleoside-DNA + H(+). Involved in base excision repair of DNA damaged by oxidation or by mutagenic agents. Acts as a DNA glycosylase that recognizes and removes damaged bases. Has a preference for oxidized purines, such as 7,8-dihydro-8-oxoguanine (8-oxoG). Has AP (apurinic/apyrimidinic) lyase activity and introduces nicks in the DNA strand. Cleaves the DNA backbone by beta-delta elimination to generate a single-strand break at the site of the removed base with both 3'- and 5'-phosphates. This chain is Formamidopyrimidine-DNA glycosylase, found in Escherichia coli O6:K15:H31 (strain 536 / UPEC).